Consider the following 335-residue polypeptide: tRNA pseudouridine synthase D (335 aa).

Asp77 acts as the Nucleophile in catalysis. In terms of domain architecture, TRUD spans 152–308 (GFPNYFTEQR…AQHLSWSFIP (157 aa)).

Belongs to the pseudouridine synthase TruD family.

It catalyses the reaction uridine(13) in tRNA = pseudouridine(13) in tRNA. Responsible for synthesis of pseudouridine from uracil-13 in transfer RNAs. The protein is tRNA pseudouridine synthase D of Histophilus somni (strain 129Pt) (Haemophilus somnus).